Reading from the N-terminus, the 367-residue chain is Multifunctional tryptophan biosynthesis protein (367 aa).

A Glutamine amidotransferase type-1 domain is found at 7–201 (NVVMIDNYDS…LNVSGGYWEE (195 aa)). 58 to 60 (GPG) serves as a coordination point for L-glutamine. The Nucleophile; for GATase activity role is filled by Cys86. Residues Gln90 and 136–137 (SL) each bind L-glutamine. Residues His175 and Glu177 each act as for GATase activity in the active site. The indole-3-glycerol phosphate synthase stretch occupies residues 209–367 (RKESILEKIY…TVLLIVKMLS (159 aa)).

In terms of assembly, tetramer of two components I and two components II.

It catalyses the reaction chorismate + L-glutamine = anthranilate + pyruvate + L-glutamate + H(+). The catalysed reaction is 1-(2-carboxyphenylamino)-1-deoxy-D-ribulose 5-phosphate + H(+) = (1S,2R)-1-C-(indol-3-yl)glycerol 3-phosphate + CO2 + H2O. It participates in amino-acid biosynthesis; L-tryptophan biosynthesis; L-tryptophan from chorismate: step 1/5. Its pathway is amino-acid biosynthesis; L-tryptophan biosynthesis; L-tryptophan from chorismate: step 4/5. The polypeptide is Multifunctional tryptophan biosynthesis protein (Pichia angusta (Yeast)).